The chain runs to 364 residues: Anthranilate N-methyltransferase (364 aa).

A disordered region spans residues 1–20 (MGSLSESHTQYKHGVEVEED). S-adenosyl-L-methionine is bound by residues Gly209, Asp232, Met253, and Lys266. His270 serves as the catalytic Proton acceptor.

Belongs to the class I-like SAM-binding methyltransferase superfamily. Cation-independent O-methyltransferase family. COMT subfamily. As to quaternary structure, homodimer. Expressed in leaves, flowers, stems and roots. Detected in the vascular tissues in stems, in the rhizodermis or the endodermis of roots, in the inside of carpels, in the central vascular bundles of the syncarp ovary and in the secretory oil glands located around the outer ovary wall.

The enzyme catalyses anthranilate + S-adenosyl-L-methionine = N-methylanthranilate + S-adenosyl-L-homocysteine + H(+). Its activity is regulated as follows. Inhibited by Ca(2+), Co(2+), Fe(2+), Fe(3+), Cu(2+) or Zn(2+). No effect of Mg(2+). In terms of biological role, involved in the biosynthesis of acridine alkaloids. N-methyltransferase with a strict substrate specificity for anthranilate. No activity with anthranilic acid methyl ester, anthraniloyl CoA, 3- or 4-amino-benzoic acid, salicylic acid, catechol, eugenol, caffeic acid, quercetin, theobromin, theophyllin, putrescine and nicotinic acid among others. The chain is Anthranilate N-methyltransferase from Ruta graveolens (Common rue).